Reading from the N-terminus, the 1366-residue chain is DNA-directed RNA polymerase subunit beta' (1366 aa).

Positions 1–20 (MTSSKPKKTSRVRKTTKNSK) are enriched in basic residues. Positions 1-33 (MTSSKPKKTSRVRKTTKNSKKNNPVTMPALAKT) are disordered. 4 residues coordinate Zn(2+): C248, C315, C322, and C325. A disordered region spans residues 1291-1366 (YTVDMPQSPA…LQEEGLLSDE (76 aa)). Residues 1354–1366 (LEGLQEEGLLSDE) are compositionally biased toward low complexity.

It belongs to the RNA polymerase beta' chain family. RpoC2 subfamily. As to quaternary structure, in cyanobacteria the RNAP catalytic core is composed of 2 alpha, 1 beta, 1 beta', 1 gamma and 1 omega subunit. When a sigma factor is associated with the core the holoenzyme is formed, which can initiate transcription. Zn(2+) serves as cofactor.

It catalyses the reaction RNA(n) + a ribonucleoside 5'-triphosphate = RNA(n+1) + diphosphate. In terms of biological role, DNA-dependent RNA polymerase catalyzes the transcription of DNA into RNA using the four ribonucleoside triphosphates as substrates. The sequence is that of DNA-directed RNA polymerase subunit beta' from Prochlorococcus marinus (strain AS9601).